A 67-amino-acid polypeptide reads, in one-letter code: MLCVVTSDNSDFRLTAKADIPIGHKVALKALKAGDTVIKYHEDIGKMVGDAEVGGHVHTHNCKTKRW.

(2R)-sulfolactate sulfo-lyase is composed of a SuyA and a SuyB subunit.

The protein resides in the cytoplasm. The enzyme catalyses (2R)-3-sulfolactate = sulfite + pyruvate + H(+). Together with SuyB, desulfonates sulfolactate to pyruvate and sulfite. The protein is (2R)-sulfolactate sulfo-lyase subunit alpha (suyA) of Paracoccus pantotrophus (Thiosphaera pantotropha).